Reading from the N-terminus, the 96-residue chain is Conotoxin Mr15.1 (96 aa).

A signal peptide spans 1-20 (MSTLKMMLLILLLLLPLATF). A propeptide spanning residues 21-57 (DSDGQAIPGGGIPSAVNSRVGRLLGGDEKSGRSLEKR) is cleaved from the precursor.

The protein belongs to the conotoxin N superfamily. Post-translationally, contains 4 disulfide bonds. As to expression, expressed by the venom duct.

Its subcellular location is the secreted. This is Conotoxin Mr15.1 from Conus marmoreus (Marble cone).